The sequence spans 421 residues: 3-isopropylmalate dehydratase large subunit (421 aa).

3 residues coordinate [4Fe-4S] cluster: Cys300, Cys360, and Cys363.

This sequence belongs to the aconitase/IPM isomerase family. LeuC type 2 subfamily. In terms of assembly, heterodimer of LeuC and LeuD. The cofactor is [4Fe-4S] cluster.

The enzyme catalyses (2R,3S)-3-isopropylmalate = (2S)-2-isopropylmalate. Its pathway is amino-acid biosynthesis; L-leucine biosynthesis; L-leucine from 3-methyl-2-oxobutanoate: step 2/4. In terms of biological role, catalyzes the isomerization between 2-isopropylmalate and 3-isopropylmalate, via the formation of 2-isopropylmaleate. The polypeptide is 3-isopropylmalate dehydratase large subunit (Thermodesulfovibrio yellowstonii (strain ATCC 51303 / DSM 11347 / YP87)).